The chain runs to 373 residues: G protein-coupled receptor 137Ba (373 aa).

Topologically, residues Met-1–Pro-15 are lumenal. Residues Tyr-16–Val-36 traverse the membrane as a helical segment. The Cytoplasmic segment spans residues Tyr-37 to Thr-55. The chain crosses the membrane as a helical span at residues Val-56 to Phe-76. The Lumenal portion of the chain corresponds to Lys-77–Thr-84. Residues Leu-85–Leu-105 form a helical membrane-spanning segment. The Cytoplasmic portion of the chain corresponds to Ser-106–Tyr-135. The chain crosses the membrane as a helical span at residues Leu-136–Val-156. Residues Lys-157–Ser-176 lie on the Lumenal side of the membrane. Residues Leu-177–Leu-197 traverse the membrane as a helical segment. At Ala-198–Thr-213 the chain is on the cytoplasmic side. Residues Leu-214–Leu-234 form a helical membrane-spanning segment. Residues Ala-235 to Val-268 lie on the Lumenal side of the membrane. Residues Val-269–Phe-289 form a helical membrane-spanning segment. Over Arg-290–Tyr-373 the chain is Cytoplasmic.

Belongs to the GPR137 family.

It is found in the lysosome membrane. In terms of biological role, lysosomal integral membrane protein that regulates the localization and activity of mTORC1, a signaling complex promoting cell growth in response to growth factors, energy levels, and amino acids. Interacts with Rag GTPases and increases the lysosomial localization and activity of Rag GTPases and thereby regulates mTORC1 translocation and activity in lysosome. Also acts as a negative regulator of osteoclast activity. May be involved in interleukin-4-induced M2 macrophage polarization. Also acts as a negative regulator of osteoclast activity. May be involved in interleukin-4-induced M2 macrophage polarization. This Danio rerio (Zebrafish) protein is G protein-coupled receptor 137Ba.